Reading from the N-terminus, the 1048-residue chain is Ankyrin repeat domain-containing protein 27 (1048 aa).

Residues 1–372 are sufficient for GEF activity towards RAB21; the sequence is MALYDEDLLK…RQGSLSTKTP (372 aa). The region spanning 233–371 is the VPS9 domain; sequence ASEDAAFNKI…IRQGSLSTKT (139 aa). 6 ANK repeats span residues 396–426, 462–491, 495–524, 528–557, 564–593, and 597–627; these read TPID…DKDA, RGQT…VVNA, HGST…STEV, NGNT…QACR, KGDT…PTAV, and LKET…RPRP. A sufficient for interaction with VPS29 region spans residues 396-460; it reads TPIDCLFKHI…PSVVTPFSRD (65 aa). The segment at 451 to 600 is interaction with RAB38; sequence PSVVTPFSRD…TAVQNRLKET (150 aa). The interaction with RAB32 stretch occupies residues 451–729; it reads PSVVTPFSRD…CAPAQKLARI (279 aa). Over residues 618-627 the composition is skewed to basic and acidic residues; sequence HLSSDRRPRP. The tract at residues 618 to 650 is disordered; the sequence is HLSSDRRPRPSEVPAQSPTRSVDSISQGSSTSS. Positions 638-650 are enriched in low complexity; it reads SVDSISQGSSTSS. A required for interaction with VAMP7 region spans residues 658 to 707; that stretch reads FRQEEVKKDYREVEKLLRAVADGDLEMVRYLLEWTEDDLDDVEDAISTVD. 5 ANK repeats span residues 668-698, 742-771, 775-804, 808-837, and 841-870; these read REVE…DLDD, DGFS…YSGA, SQAV…KPNK, SGNT…SINA, and KGNT…SVDI. Residues 692–745 are sufficient for interaction with VPS29; it reads TEDDLDDVEDAISTVDLEFCHPLCQCPKCAPAQKLARISANGLSVNVTNQDGFS. Over residues 949-962 the composition is skewed to basic and acidic residues; that stretch reads ERTSRETMGRDRSV. Residues 949–1019 form a disordered region; that stretch reads ERTSRETMGR…AAPGHRPMVR (71 aa). Residues serine 961 and serine 969 each carry the phosphoserine modification. The span at 979–995 shows a compositional bias: polar residues; that stretch reads TGKQSDLSDLSRYQTSE. Residues 996 to 1006 are compositionally biased toward basic and acidic residues; that stretch reads EGNKGLPERPV. A Phosphothreonine modification is found at threonine 1022.

As to quaternary structure, interacts with RAB21 (GDP-bound form), VPS29, KIF5A, KIF5C, GOLGA4. Interacts with RAB32 (GTP-bound form), RAB38 (GTP-bound form), VAMP7. Interacts with low affinity with RAB5. ANKRD27:RAB32 heterodimers can homodimerize to form tetramers. Can interact with RAB38 or RAB32, VPS29 and VAMP7 simultaneously. A decreased interaction with RAB32 seen in the presence of SGSM2.

The protein resides in the early endosome. The protein localises to the late endosome. It localises to the cytoplasmic vesicle membrane. Its subcellular location is the lysosome. It is found in the cell membrane. The protein resides in the melanosome. The protein localises to the cytoplasmic vesicle. Functionally, may be a guanine exchange factor (GEF) for Rab21, Rab32 and Rab38 and regulate endosome dynamics. May regulate the participation of VAMP7 in membrane fusion events; in vitro inhibits VAMP7-mediated SNARE complex formation by trapping VAMP7 in a closed, fusogenically inactive conformation. Involved in peripheral melanosomal distribution of TYRP1 in melanocytes; the function, which probably is implicating vesicle-trafficking, includes cooperation with Rab32, Rab38 and VAMP7. Involved in the regulation of neurite growth; the function seems to require its GEF activity, probably towards Rab21, and VAMP7 but not Rab32/38. Proposed to be involved in Golgi sorting of VAMP7 and transport of VAMP7 vesicles to the cell surface; the function seems to implicate kinesin heavy chain isoform 5 proteins, GOLGA4, RAB21 and MACF1. Required for the colocalization of VAMP7 and Rab21, probably on TGN sites. Involved in GLUT1 endosome-to-plasma membrane trafficking; the function is dependent of association with VPS29. Regulates the proper trafficking of melanogenic enzymes TYR, TYRP1 and DCT/TYRP2 to melanosomes in melanocytes. In Mus musculus (Mouse), this protein is Ankyrin repeat domain-containing protein 27 (Ankrd27).